The chain runs to 104 residues: MRPEKLDAAAIAEHLHKMEGWVLAEDGGSIWKTFRFKTFAEAFTFMTQCAFAAEKLNHHPEWFNVYNKVDVTLSTHDADGLTELDFKLAAKMDQAAEGRMPDHM.

The protein belongs to the pterin-4-alpha-carbinolamine dehydratase family.

The enzyme catalyses (4aS,6R)-4a-hydroxy-L-erythro-5,6,7,8-tetrahydrobiopterin = (6R)-L-erythro-6,7-dihydrobiopterin + H2O. The protein is Putative pterin-4-alpha-carbinolamine dehydratase (pcbD) of Rhizobium meliloti (strain 1021) (Ensifer meliloti).